Reading from the N-terminus, the 498-residue chain is ATP synthase subunit beta, chloroplastic (498 aa).

Residue 172-179 (GGAGVGKT) participates in ATP binding.

It belongs to the ATPase alpha/beta chains family. As to quaternary structure, F-type ATPases have 2 components, CF(1) - the catalytic core - and CF(0) - the membrane proton channel. CF(1) has five subunits: alpha(3), beta(3), gamma(1), delta(1), epsilon(1). CF(0) has four main subunits: a(1), b(1), b'(1) and c(9-12).

It localises to the plastid. The protein localises to the chloroplast thylakoid membrane. The catalysed reaction is ATP + H2O + 4 H(+)(in) = ADP + phosphate + 5 H(+)(out). Its function is as follows. Produces ATP from ADP in the presence of a proton gradient across the membrane. The catalytic sites are hosted primarily by the beta subunits. The sequence is that of ATP synthase subunit beta, chloroplastic from Magnolia tripetala (Umbrella-tree).